The following is a 1792-amino-acid chain: Brefeldin A-inhibited guanine nucleotide-exchange protein 2 (1792 aa).

Position 1 is an N-acetylmethionine (M1). Residues 2–224 (QESQTKSMFV…KPQSPVIQAT (223 aa)) are DCB; DCB:DCB domain and DCB:HUS domain interaction. The tract at residues 207-294 (ELEKPMQSKP…SRGTDSGAQE (88 aa)) is disordered. Residues S214, S218, and S227 each carry the phosphoserine modification. Positions 214 to 225 (SKPQSPVIQATA) are enriched in polar residues. Polar residues predominate over residues 233–243 (LKQSQAQSKPT). T244 is subject to Phosphothreonine. Phosphoserine is present on residues S355 and S356. Residues 515–535 (ADAQCVVDIYVNYDCDLNAAN) form an HUS; DCB:HUS domain interaction region. Phosphoserine is present on S621. T623 carries the post-translational modification Phosphothreonine. A Phosphoserine modification is found at S624. Position 633 is a phosphothreonine (T633). The 132-residue stretch at 661–792 (FNKKPKRGIQ…IIMLTTDLHS (132 aa)) folds into the SEC7 domain. Residues S707, S1518, S1520, S1521, S1532, S1535, S1541, and S1789 each carry the phosphoserine modification.

In terms of assembly, homodimer. Interacts with ARFGEF1/BIG1; both proteins are probably part of the same or very similar macromolecular complexes. Interacts with PRKAR1A, PRKAR2A, PRKAR1B, PRKAR2B, PPP1CC, PDE3A, TNFRSF1A, MYCBP and EXOC7. Interacts with GABRB1, GABRB2 and GABRB3. Post-translationally, in vitro phosphorylated by PKA reducing its GEF activity and dephosphorylated by phosphatase PP1.

The protein resides in the cytoplasm. It is found in the membrane. Its subcellular location is the golgi apparatus. The protein localises to the perinuclear region. It localises to the trans-Golgi network. The protein resides in the endosome. It is found in the cytoskeleton. Its subcellular location is the microtubule organizing center. The protein localises to the centrosome. It localises to the cell projection. The protein resides in the dendrite. It is found in the cytoplasmic vesicle. Its subcellular location is the synapse. Its activity is regulated as follows. Inhibited by brefeldin A. Promotes guanine-nucleotide exchange on ARF1 and ARF3 and to a lower extent on ARF5 and ARF6. Promotes the activation of ARF1/ARF5/ARF6 through replacement of GDP with GTP. Involved in the regulation of Golgi vesicular transport. Required for the integrity of the endosomal compartment. Involved in trafficking from the trans-Golgi network (TGN) to endosomes and is required for membrane association of the AP-1 complex and GGA1. Seems to be involved in recycling of the transferrin receptor from recycling endosomes to the plasma membrane. Probably is involved in the exit of GABA(A) receptors from the endoplasmic reticulum. Involved in constitutive release of tumor necrosis factor receptor 1 via exosome-like vesicles; the function seems to involve PKA and specifically PRKAR2B. Proposed to act as A kinase-anchoring protein (AKAP) and may mediate crosstalk between Arf and PKA pathways. The chain is Brefeldin A-inhibited guanine nucleotide-exchange protein 2 (Arfgef2) from Mus musculus (Mouse).